The following is a 275-amino-acid chain: Melanoma-associated antigen B5 (275 aa).

Residues 1 to 33 are disordered; that stretch reads MTSAGVFNAGSDERANSRDEEYPCSSEVSPSTE. Positions 11 to 21 are enriched in basic and acidic residues; it reads SDERANSRDEE. The segment covering 23-33 has biased composition (low complexity); that stretch reads PCSSEVSPSTE. The 200-residue stretch at 40-239 folds into the MAGE domain; it reads INIKVGLLEQ…GAFSSQYEEA (200 aa).

Expressed in testis. Not expressed in other normal tissues, but is expressed in tumors of different histological origins.

This Homo sapiens (Human) protein is Melanoma-associated antigen B5 (MAGEB5).